A 967-amino-acid chain; its full sequence is A disintegrin and metalloproteinase with thrombospondin motifs 1 (967 aa).

The signal sequence occupies residues 1-54 (MQPEVPLGSGKLKPCSDMGDIQRAAKFRSSQSAHMLLLLLASITMLLCVRGAHG). Residues 55 to 252 (RPTEEDEELV…TGPGSIRKKR (198 aa)) constitute a propeptide that is removed on maturation. The tract at residues 198–252 (RGSGGAKCGVMDEETLPTSNSGRESQNTPDQWPLRNPTPQGAGKPTGPGSIRKKR) is disordered. Positions 203-210 (AKCGVMDE) match the Cysteine switch motif. Cys-205 serves as a coordination point for Zn(2+). Over residues 213–227 (LPTSNSGRESQNTPD) the composition is skewed to polar residues. Residues 258 to 467 (RYVETMLVAD…GHGECLMDKP (210 aa)) form the Peptidase M12B domain. Ca(2+) contacts are provided by Glu-261, Asp-344, and Asp-351. 4 cysteine pairs are disulfide-bonded: Cys-333–Cys-385, Cys-362–Cys-367, Cys-379–Cys-462, and Cys-417–Cys-446. His-401 is a Zn(2+) binding site. Glu-402 is an active-site residue. Zn(2+) is bound by residues His-405 and His-411. Residues Cys-462 and Asp-465 each contribute to the Ca(2+) site. In terms of domain architecture, Disintegrin spans 476–558 (DLPGTLYDAN…TDMKHFATPV (83 aa)). 4 disulfide bridges follow: Cys-488–Cys-511, Cys-499–Cys-521, Cys-506–Cys-540, and Cys-534–Cys-545. N-linked (GlcNAc...) asparagine glycosylation occurs at Asn-547. Residues 559–614 (HGSWGPWGPWGDCSRTCGGGVQYTMRECDNPVPKNGGKYCEGKRVRYRSCNIEDCP) enclose the TSP type-1 1 domain. Cystine bridges form between Cys-571/Cys-608, Cys-575/Cys-613, and Cys-586/Cys-598. Asn-720, Asn-764, and Asn-782 each carry an N-linked (GlcNAc...) asparagine glycan. Residues 725–857 (KKISGTVTST…PFNAIPTFSE (133 aa)) form a spacer region. 2 TSP type-1 domains span residues 854 to 910 (TFSE…LPCP) and 911 to 967 (RWQV…TQCS). Asn-945 carries an N-linked (GlcNAc...) asparagine glycan.

Zn(2+) serves as cofactor. Post-translationally, the precursor is cleaved by a furin endopeptidase. In terms of processing, glycosylated. Can be O-fucosylated by POFUT2 on a serine or a threonine residue found within the consensus sequence C1-X(2)-(S/T)-C2-G of the TSP type-1 repeat domains where C1 and C2 are the first and second cysteine residue of the repeat, respectively. Fucosylated repeats can then be further glycosylated by the addition of a beta-1,3-glucose residue by the glucosyltransferase, B3GALTL. Fucosylation mediates the efficient secretion of ADAMTS family members. Can also be C-glycosylated with one or two mannose molecules on tryptophan residues within the consensus sequence W-X-X-W of the TPRs, and N-glycosylated. These other glycosylations can also facilitate secretion.

It is found in the secreted. It localises to the extracellular space. Its subcellular location is the extracellular matrix. Metalloprotease which cleaves aggrecan, a cartilage proteoglycan, at the '1683-Glu-|-Leu-1684' site (within the chondroitin sulfate attachment domain), and may be involved in its turnover. Also cleaves COMP. Has angiogenic inhibitor activity. May play a critical role in follicular rupture. The polypeptide is A disintegrin and metalloproteinase with thrombospondin motifs 1 (Adamts1) (Rattus norvegicus (Rat)).